The following is a 143-amino-acid chain: Peptidyl-prolyl cis-trans isomerase FKBP15-3 (143 aa).

Residues 56–143 form the PPIase FKBP-type domain; the sequence is GKRVSVHYTG…VFDVELLNVK (88 aa).

This sequence belongs to the FKBP-type PPIase family.

It catalyses the reaction [protein]-peptidylproline (omega=180) = [protein]-peptidylproline (omega=0). In terms of biological role, PPIases accelerate the folding of proteins. It catalyzes the cis-trans isomerization of proline imidic peptide bonds in oligopeptides. The chain is Peptidyl-prolyl cis-trans isomerase FKBP15-3 (FKBP15-3) from Arabidopsis thaliana (Mouse-ear cress).